Consider the following 502-residue polypeptide: Probable cytosol aminopeptidase (502 aa).

Lys-265 and Asp-270 together coordinate Mn(2+). Lys-277 is an active-site residue. Residues Asp-288, Asp-347, and Glu-349 each contribute to the Mn(2+) site. The active site involves Arg-351.

It belongs to the peptidase M17 family. Mn(2+) serves as cofactor.

The protein localises to the cytoplasm. It carries out the reaction Release of an N-terminal amino acid, Xaa-|-Yaa-, in which Xaa is preferably Leu, but may be other amino acids including Pro although not Arg or Lys, and Yaa may be Pro. Amino acid amides and methyl esters are also readily hydrolyzed, but rates on arylamides are exceedingly low.. The catalysed reaction is Release of an N-terminal amino acid, preferentially leucine, but not glutamic or aspartic acids.. Presumably involved in the processing and regular turnover of intracellular proteins. Catalyzes the removal of unsubstituted N-terminal amino acids from various peptides. This chain is Probable cytosol aminopeptidase, found in Rickettsia bellii (strain RML369-C).